We begin with the raw amino-acid sequence, 194 residues long: Adenylate kinase isoenzyme 1 (194 aa).

Residue Met1 is modified to N-acetylmethionine. ATP is bound at residue 18–23 (GSGKGT). Residue Ser38 is modified to Phosphoserine. The tract at residues 38 to 67 (STGDLLRAEVSSGSSRGKMLSSIMEKGELV) is NMP. AMP contacts are provided by residues Thr39, Arg44, 65–67 (ELV), 94–97 (GYPR), and Gln101. An LID region spans residues 131–141 (KRGETSGRVDD). Arg132 contributes to the ATP binding site. AMP contacts are provided by Arg138 and Arg149. Gly177 is an ATP binding site.

It belongs to the adenylate kinase family. AK1 subfamily. In terms of assembly, monomer. It depends on Mg(2+) as a cofactor.

It localises to the cytoplasm. It carries out the reaction a ribonucleoside 5'-phosphate + ATP = a ribonucleoside 5'-diphosphate + ADP. The catalysed reaction is AMP + ATP = 2 ADP. The enzyme catalyses dAMP + ATP = dADP + ADP. It catalyses the reaction dATP + AMP = dADP + ADP. It carries out the reaction dAMP + dATP = 2 dADP. The catalysed reaction is a 2'-deoxyribonucleoside 5'-diphosphate + ATP = a 2'-deoxyribonucleoside 5'-triphosphate + ADP. The enzyme catalyses a ribonucleoside 5'-diphosphate + ATP = a ribonucleoside 5'-triphosphate + ADP. It catalyses the reaction CDP + GTP = CTP + GDP. It carries out the reaction GDP + ATP = GTP + ADP. The catalysed reaction is UDP + ATP = UTP + ADP. The enzyme catalyses GTP + UDP = UTP + GDP. It catalyses the reaction dTDP + GTP = dTTP + GDP. It carries out the reaction dCDP + GTP = dCTP + GDP. The catalysed reaction is dGDP + ATP = dGTP + ADP. The enzyme catalyses dADP + GTP = dATP + GDP. It catalyses the reaction thiamine diphosphate + ADP = thiamine triphosphate + AMP. Catalyzes the reversible transfer of the terminal phosphate group between ATP and AMP. Also displays broad nucleoside diphosphate kinase activity. Plays an important role in cellular energy homeostasis and in adenine nucleotide metabolism. Also catalyzes at a very low rate the synthesis of thiamine triphosphate (ThTP) from thiamine diphosphate (ThDP) and ADP. The sequence is that of Adenylate kinase isoenzyme 1 (Ak1) from Rattus norvegicus (Rat).